A 65-amino-acid chain; its full sequence is Defensin-B3 (65 aa).

A signal peptide spans 1-21; the sequence is MRLLLVFFFLSLLDQAPPARS. Intrachain disulfides connect C29–C58, C36–C50, and C40–C59. A propeptide spanning residues 62–65 is cleaved from the precursor; the sequence is ESPR.

This sequence belongs to the beta-defensin family. As to expression, lowly expressed in spleen, and expressed at lower levels in kidney, lung and testis.

It localises to the secreted. Its function is as follows. Has antimicrobial activity. The sequence is that of Defensin-B3 from Ornithorhynchus anatinus (Duckbill platypus).